Reading from the N-terminus, the 597-residue chain is U3 small nucleolar RNA-associated protein 6 homolog (597 aa).

HAT repeat units lie at residues Ala121–Glu153, Leu156–Met188, Arg304–Glu335, Gly488–Glu520, and Cys524–Asn557.

Belongs to the UTP6 family. In terms of assembly, part of the small subunit (SSU) processome, composed of more than 70 proteins and the RNA chaperone small nucleolar RNA (snoRNA) U3.

It is found in the nucleus. The protein localises to the nucleolus. Its function is as follows. Part of the small subunit (SSU) processome, first precursor of the small eukaryotic ribosomal subunit. During the assembly of the SSU processome in the nucleolus, many ribosome biogenesis factors, an RNA chaperone and ribosomal proteins associate with the nascent pre-rRNA and work in concert to generate RNA folding, modifications, rearrangements and cleavage as well as targeted degradation of pre-ribosomal RNA by the RNA exosome. Involved in nucleolar processing of pre-18S ribosomal RNA. In Homo sapiens (Human), this protein is U3 small nucleolar RNA-associated protein 6 homolog.